Reading from the N-terminus, the 154-residue chain is Large ribosomal subunit protein uL13 (154 aa).

It belongs to the universal ribosomal protein uL13 family. As to quaternary structure, part of the 50S ribosomal subunit.

Its function is as follows. This protein is one of the early assembly proteins of the 50S ribosomal subunit, although it is not seen to bind rRNA by itself. It is important during the early stages of 50S assembly. This is Large ribosomal subunit protein uL13 from Bartonella henselae (strain ATCC 49882 / DSM 28221 / CCUG 30454 / Houston 1) (Rochalimaea henselae).